We begin with the raw amino-acid sequence, 81 residues long: Small ribosomal subunit protein uS17 (81 aa).

It belongs to the universal ribosomal protein uS17 family. As to quaternary structure, part of the 30S ribosomal subunit.

Functionally, one of the primary rRNA binding proteins, it binds specifically to the 5'-end of 16S ribosomal RNA. This is Small ribosomal subunit protein uS17 from Trichormus variabilis (strain ATCC 29413 / PCC 7937) (Anabaena variabilis).